The following is a 237-amino-acid chain: Sugar fermentation stimulation protein homolog (237 aa).

This sequence belongs to the SfsA family.

This is Sugar fermentation stimulation protein homolog from Pseudomonas putida (strain ATCC 47054 / DSM 6125 / CFBP 8728 / NCIMB 11950 / KT2440).